The primary structure comprises 394 residues: Cysteine desulfurase IscS (394 aa).

Pyridoxal 5'-phosphate-binding positions include 72–73 (GT), asparagine 152, glutamine 180, and 200–202 (SAH). Lysine 203 carries the post-translational modification N6-(pyridoxal phosphate)lysine. Pyridoxal 5'-phosphate is bound at residue threonine 238. The Cysteine persulfide intermediate role is filled by cysteine 326. Cysteine 326 is a binding site for [2Fe-2S] cluster.

The protein belongs to the class-V pyridoxal-phosphate-dependent aminotransferase family. NifS/IscS subfamily. As to quaternary structure, homodimer. Forms a heterotetramer with IscU, interacts with other sulfur acceptors. Pyridoxal 5'-phosphate serves as cofactor.

Its subcellular location is the cytoplasm. The catalysed reaction is (sulfur carrier)-H + L-cysteine = (sulfur carrier)-SH + L-alanine. It functions in the pathway cofactor biosynthesis; iron-sulfur cluster biosynthesis. Functionally, master enzyme that delivers sulfur to a number of partners involved in Fe-S cluster assembly, tRNA modification or cofactor biosynthesis. Catalyzes the removal of elemental sulfur atoms from cysteine to produce alanine. Functions as a sulfur delivery protein for Fe-S cluster synthesis onto IscU, an Fe-S scaffold assembly protein, as well as other S acceptor proteins. This is Cysteine desulfurase IscS from Dictyoglomus turgidum (strain DSM 6724 / Z-1310).